The following is a 439-amino-acid chain: Dihydroorotase (439 aa).

The Zn(2+) site is built by histidine 73 and histidine 75. Substrate-binding positions include 75–77 (HLR) and asparagine 107. Zn(2+)-binding residues include aspartate 165, histidine 192, and histidine 245. Substrate is bound at residue asparagine 291. Residue aspartate 318 coordinates Zn(2+). The active site involves aspartate 318. Histidine 322 lines the substrate pocket.

Belongs to the metallo-dependent hydrolases superfamily. DHOase family. Class I DHOase subfamily. The cofactor is Zn(2+).

The enzyme catalyses (S)-dihydroorotate + H2O = N-carbamoyl-L-aspartate + H(+). It participates in pyrimidine metabolism; UMP biosynthesis via de novo pathway; (S)-dihydroorotate from bicarbonate: step 3/3. In terms of biological role, catalyzes the reversible cyclization of carbamoyl aspartate to dihydroorotate. The sequence is that of Dihydroorotase from Syntrophobacter fumaroxidans (strain DSM 10017 / MPOB).